The following is a 211-amino-acid chain: Ribosome maturation factor RimM (211 aa).

The PRC barrel domain occupies 111 to 182 (PDAWYDHQLV…TLVVTPPLGL (72 aa)). Residues 184 to 211 (EEIPDETPTAEPTPAEAAEPAPEGDDAR) are disordered. Residues 189–204 (ETPTAEPTPAEAAEPA) are compositionally biased toward low complexity.

The protein belongs to the RimM family. Binds ribosomal protein uS19.

The protein resides in the cytoplasm. Its function is as follows. An accessory protein needed during the final step in the assembly of 30S ribosomal subunit, possibly for assembly of the head region. Essential for efficient processing of 16S rRNA. May be needed both before and after RbfA during the maturation of 16S rRNA. It has affinity for free ribosomal 30S subunits but not for 70S ribosomes. The protein is Ribosome maturation factor RimM of Clavibacter michiganensis subsp. michiganensis (strain NCPPB 382).